The primary structure comprises 607 residues: MPNETLQNQIASLPENPGVYLMKNAQGEIIYVGKAAVLKDRVKSYFVPPSRLTPKTCQLVSQINELEYLITGSEQEALILELNLIKRHRPYFNVRLKDDKGFPYLKITLNEKWPRIYITRSMADDGGRYFGPFANTRSVRHTLQVLKELFRFRSCNRTEPEKRSRPCLEYDIHQCLSPCTGKISKSDYDHLISQAILFLEGKQDQVLKLLIRLMNEASARLDYETAALRRDQIASIKEVIEGQQLAARVTGEQDAIAFAQEGDLSMVQVFFIRRGKLIGRESFCLQGTREEKPGDILSEFAKQFYHSSTQIPPKIVTQYPVSDREILEKWLSQRRGDKVHITAGLRGQPKELINIVAENAREQLKQARIKNLSSSVTLTDALAELQTALGLSLPPQRIEGYDISNIQGTNAVGSMVVFENGKPQKAHYRRFRIKTVKGADDFSMLKEVISRRFGRVHREDAGESFARLPSLMLIDGGKGQLSSVKETLDKLGLEGQAVIGLAKEFEEIYLPHKSEPIRLAANSPALQLLQRVRDEAHRFALGYHLHIRQKSGLTSALDGIPGVGPSRRRLLIKTFGSVAGIRQASFEKLSQVKGINQALALSIKELL.

The region spanning E15–V94 is the GIY-YIG domain. The 36-residue stretch at D204 to V239 folds into the UVR domain.

The protein belongs to the UvrC family. In terms of assembly, interacts with UvrB in an incision complex.

It is found in the cytoplasm. In terms of biological role, the UvrABC repair system catalyzes the recognition and processing of DNA lesions. UvrC both incises the 5' and 3' sides of the lesion. The N-terminal half is responsible for the 3' incision and the C-terminal half is responsible for the 5' incision. In Dehalococcoides mccartyi (strain ATCC BAA-2100 / JCM 16839 / KCTC 5957 / BAV1), this protein is UvrABC system protein C.